The chain runs to 54 residues: MHKNTHTKPDVNFYDKSGKTPLDWYSDYNATKIVETLIKNGGNVSSVYSRCSYS.

One copy of the ANK repeat lies at 17–46 (SGKTPLDWYSDYNATKIVETLIKNGGNVSS).

This Rickettsia conorii (strain ATCC VR-613 / Malish 7) protein is Putative ankyrin repeat protein RC0701.